The sequence spans 266 residues: Chymotrypsin-like elastase family member 1 (266 aa).

A signal peptide spans 1 to 16 (MLRLLVFTSLVLYGHS). Residues 17 to 26 (TQDFPETNAR) constitute a propeptide, activation peptide. The Peptidase S1 domain occupies 27 to 264 (VVGGTAVSKN…YISWINNAIA (238 aa)). A disulfide bond links cysteine 56 and cysteine 72. The active-site Charge relay system is histidine 71. Ca(2+)-binding residues include aspartate 85, asparagine 87, glutamine 90, and glutamate 95. Asparagine 87 carries an N-linked (GlcNAc...) asparagine glycan. Aspartate 119 serves as the catalytic Charge relay system. 3 cysteine pairs are disulfide-bonded: cysteine 153–cysteine 220, cysteine 184–cysteine 200, and cysteine 210–cysteine 240. Serine 214 functions as the Charge relay system in the catalytic mechanism. N-linked (GlcNAc...) asparagine glycosylation occurs at asparagine 241.

The protein belongs to the peptidase S1 family. Elastase subfamily. The cofactor is Ca(2+). Pancreas.

Its subcellular location is the secreted. The enzyme catalyses Hydrolysis of proteins, including elastin. Preferential cleavage: Ala-|-Xaa.. Its function is as follows. Serine proteases that hydrolyze many proteins in addition to elastin. This Bos taurus (Bovine) protein is Chymotrypsin-like elastase family member 1 (CELA1).